We begin with the raw amino-acid sequence, 225 residues long: 2-C-methyl-D-erythritol 4-phosphate cytidylyltransferase (225 aa).

Belongs to the IspD/TarI cytidylyltransferase family. IspD subfamily.

The enzyme catalyses 2-C-methyl-D-erythritol 4-phosphate + CTP + H(+) = 4-CDP-2-C-methyl-D-erythritol + diphosphate. It participates in isoprenoid biosynthesis; isopentenyl diphosphate biosynthesis via DXP pathway; isopentenyl diphosphate from 1-deoxy-D-xylulose 5-phosphate: step 2/6. In terms of biological role, catalyzes the formation of 4-diphosphocytidyl-2-C-methyl-D-erythritol from CTP and 2-C-methyl-D-erythritol 4-phosphate (MEP). The sequence is that of 2-C-methyl-D-erythritol 4-phosphate cytidylyltransferase from Haemophilus influenzae (strain PittGG).